The primary structure comprises 305 residues: Coiled-coil domain-containing protein 83 (305 aa).

The tract at residues 1–25 (MDSSAKGSKKDAPDGPPKDSKLPVS) is disordered. A compositionally biased stretch (basic and acidic residues) spans 8–21 (SKKDAPDGPPKDSK). A coiled-coil region spans residues 37–186 (ENAVERFMFH…LEDEKKRISR (150 aa)).

In Mus musculus (Mouse), this protein is Coiled-coil domain-containing protein 83 (Ccdc83).